The chain runs to 206 residues: Large ribosomal subunit protein uL4 (206 aa).

The segment at 43–78 (ARSGNRKQKDREEVKHTTKKPWRQKGTGRARAGMSS) is disordered. Positions 49–58 (KQKDREEVKH) are enriched in basic and acidic residues. The segment covering 59–70 (TTKKPWRQKGTG) has biased composition (basic residues).

It belongs to the universal ribosomal protein uL4 family. In terms of assembly, part of the 50S ribosomal subunit.

In terms of biological role, one of the primary rRNA binding proteins, this protein initially binds near the 5'-end of the 23S rRNA. It is important during the early stages of 50S assembly. It makes multiple contacts with different domains of the 23S rRNA in the assembled 50S subunit and ribosome. Functionally, forms part of the polypeptide exit tunnel. The polypeptide is Large ribosomal subunit protein uL4 (Cupriavidus pinatubonensis (strain JMP 134 / LMG 1197) (Cupriavidus necator (strain JMP 134))).